Reading from the N-terminus, the 61-residue chain is Small ribosomal subunit protein uS14 (61 aa).

Zn(2+) contacts are provided by Cys-24, Cys-27, Cys-40, and Cys-43.

This sequence belongs to the universal ribosomal protein uS14 family. Zinc-binding uS14 subfamily. Part of the 30S ribosomal subunit. Contacts proteins S3 and S10. The cofactor is Zn(2+).

Functionally, binds 16S rRNA, required for the assembly of 30S particles and may also be responsible for determining the conformation of the 16S rRNA at the A site. This Chloroflexus aurantiacus (strain ATCC 29364 / DSM 637 / Y-400-fl) protein is Small ribosomal subunit protein uS14.